The primary structure comprises 134 residues: Small ribosomal subunit protein uS9 (134 aa).

The segment at 114-134 (EVERKKYGLKKARRAPQFSKR) is disordered. Basic residues predominate over residues 120-134 (YGLKKARRAPQFSKR).

Belongs to the universal ribosomal protein uS9 family.

This is Small ribosomal subunit protein uS9 from Thermotoga sp. (strain RQ2).